A 206-amino-acid polypeptide reads, in one-letter code: dITP/XTP pyrophosphatase (206 aa).

Residue 7-12 participates in substrate binding; that stretch reads TSNKDK. Asp-74 functions as the Proton acceptor in the catalytic mechanism. Residue Asp-74 coordinates Mg(2+). Substrate-binding positions include Ser-75, 159 to 162, Lys-182, and 187 to 188; these read FGYD and HR.

It belongs to the HAM1 NTPase family. As to quaternary structure, homodimer. Mg(2+) is required as a cofactor.

It carries out the reaction XTP + H2O = XMP + diphosphate + H(+). It catalyses the reaction dITP + H2O = dIMP + diphosphate + H(+). The catalysed reaction is ITP + H2O = IMP + diphosphate + H(+). Its function is as follows. Pyrophosphatase that catalyzes the hydrolysis of nucleoside triphosphates to their monophosphate derivatives, with a high preference for the non-canonical purine nucleotides XTP (xanthosine triphosphate), dITP (deoxyinosine triphosphate) and ITP. Seems to function as a house-cleaning enzyme that removes non-canonical purine nucleotides from the nucleotide pool, thus preventing their incorporation into DNA/RNA and avoiding chromosomal lesions. This Campylobacter hominis (strain ATCC BAA-381 / DSM 21671 / CCUG 45161 / LMG 19568 / NCTC 13146 / CH001A) protein is dITP/XTP pyrophosphatase.